Here is a 222-residue protein sequence, read N- to C-terminus: Superoxide dismutase [Mn], mitochondrial (222 aa).

Residues 1–24 (MLCRAACSTGRRLGPVAGAAGSRH) constitute a mitochondrion transit peptide. Residue histidine 50 participates in Mn(2+) binding. At tyrosine 58 the chain carries 3'-nitrotyrosine. Residues lysine 68 and lysine 75 each carry the N6-acetyllysine; alternate modification. An N6-succinyllysine; alternate mark is found at lysine 68 and lysine 75. Histidine 98 is a Mn(2+) binding site. Lysine 114 carries the post-translational modification N6-acetyllysine. N6-acetyllysine; alternate is present on residues lysine 122 and lysine 130. Lysine 122 and lysine 130 each carry N6-succinyllysine; alternate. Mn(2+) contacts are provided by aspartate 183 and histidine 187. At lysine 202 the chain carries N6-acetyllysine.

This sequence belongs to the iron/manganese superoxide dismutase family. In terms of assembly, homotetramer. Mn(2+) is required as a cofactor. In terms of processing, nitrated under oxidative stress. Nitration coupled with oxidation inhibits the catalytic activity. Post-translationally, acetylation at Lys-122 decreases enzymatic activity. Deacetylated by SIRT3 upon exposure to ionizing radiations or after long fasting. Polyubiquitinated; leading to proteasomal degradation. Deubiquitinated by USP36 which increases protein stability.

It is found in the mitochondrion matrix. The catalysed reaction is 2 superoxide + 2 H(+) = H2O2 + O2. Functionally, destroys superoxide anion radicals which are normally produced within the cells and which are toxic to biological systems. The sequence is that of Superoxide dismutase [Mn], mitochondrial (Sod2) from Mus musculus (Mouse).